A 126-amino-acid chain; its full sequence is Large ribosomal subunit protein bL12 (126 aa).

It belongs to the bacterial ribosomal protein bL12 family. In terms of assembly, homodimer. Part of the ribosomal stalk of the 50S ribosomal subunit. Forms a multimeric L10(L12)X complex, where L10 forms an elongated spine to which 2 to 4 L12 dimers bind in a sequential fashion. Binds GTP-bound translation factors.

Its function is as follows. Forms part of the ribosomal stalk which helps the ribosome interact with GTP-bound translation factors. Is thus essential for accurate translation. The polypeptide is Large ribosomal subunit protein bL12 (Nitrosococcus oceani (strain ATCC 19707 / BCRC 17464 / JCM 30415 / NCIMB 11848 / C-107)).